Reading from the N-terminus, the 228-residue chain is Aldehyde dehydrogenase 9 (228 aa).

Residue 76–81 coordinates NAD(+); sequence GSTETA. Residues Glu99 and Cys132 contribute to the active site.

Belongs to the aldehyde dehydrogenase family.

The enzyme catalyses an aldehyde + NAD(+) + H2O = a carboxylate + NADH + 2 H(+). The protein operates within alcohol metabolism; ethanol degradation; acetate from ethanol: step 2/2. The protein is Aldehyde dehydrogenase 9 (ALDH9) of Polyandrocarpa misakiensis (Tunicate).